We begin with the raw amino-acid sequence, 468 residues long: UDP-N-acetylmuramoyl-L-alanine--L-glutamate ligase (468 aa).

Residue 122–128 (GTKGKST) coordinates ATP.

The protein belongs to the MurCDEF family. MurD2 subfamily.

The protein resides in the cytoplasm. The catalysed reaction is UDP-N-acetyl-alpha-D-muramoyl-L-alanine + L-glutamate + ATP = UDP-N-acetyl-alpha-D-muramoyl-L-alanyl-L-glutamate + ADP + phosphate + H(+). The protein operates within cell wall biogenesis; peptidoglycan biosynthesis. Cell wall formation. Catalyzes the addition of L-glutamate to the nucleotide precursor UDP-N-acetylmuramoyl-L-alanine. The polypeptide is UDP-N-acetylmuramoyl-L-alanine--L-glutamate ligase (Xanthomonas axonopodis pv. citri (strain 306)).